Consider the following 397-residue polypeptide: Tryptophan synthase beta chain (397 aa).

An N6-(pyridoxal phosphate)lysine modification is found at Lys-87.

It belongs to the TrpB family. Tetramer of two alpha and two beta chains. Requires pyridoxal 5'-phosphate as cofactor.

It carries out the reaction (1S,2R)-1-C-(indol-3-yl)glycerol 3-phosphate + L-serine = D-glyceraldehyde 3-phosphate + L-tryptophan + H2O. Its pathway is amino-acid biosynthesis; L-tryptophan biosynthesis; L-tryptophan from chorismate: step 5/5. The beta subunit is responsible for the synthesis of L-tryptophan from indole and L-serine. The protein is Tryptophan synthase beta chain of Escherichia coli O127:H6 (strain E2348/69 / EPEC).